The following is an 80-amino-acid chain: Putative membrane protein insertion efficiency factor (80 aa).

Belongs to the UPF0161 family.

The protein localises to the cell inner membrane. In terms of biological role, could be involved in insertion of integral membrane proteins into the membrane. The chain is Putative membrane protein insertion efficiency factor from Syntrophobacter fumaroxidans (strain DSM 10017 / MPOB).